Here is a 495-residue protein sequence, read N- to C-terminus: Inner membrane ALBINO3-like protein 1, chloroplastic (495 aa).

The chain crosses the membrane as a helical span at residues 76 to 96 (LGAIYVLADASASTAAAAVMP). The Stromal segment spans residues 97 to 206 (TAVDSAAGAA…VLYEQAGVNP (110 aa)). A helical membrane pass occupies residues 207 to 227 (LAGCLPTLATIPIFIGLFSSL). Over 228-273 (TNVANDGLLDTQGFYFVPSLAGPTTMAMRQSGLGTSWLWPLGPDGA) the chain is Lumenal. The helical transmembrane segment at 274–294 (PPIGWEDAAAYLTLPLLLVAV) threads the bilayer. Topologically, residues 295–317 (QYASSSVTSPPIDPKDENANTQR) are stromal. Residues 318–338 (ALLVFLPLMVGWFSLNVPAGL) form a helical membrane-spanning segment. At 339-441 (SLYYLANTVL…ASVSLSVDDS (103 aa)) the chain is on the lumenal side. Residues 442–462 (TAAIAGTATMAVTAGAPAAAM) form a helical membrane-spanning segment. The Stromal segment spans residues 463 to 495 (DPSKVNRRCKRRRLTSLVQDGSTASAAVAGASA).

This sequence belongs to the OXA1/ALB3/YidC (TC 2.A.9.2) family. In terms of assembly, associates with the LHCII complex and with the psaE subunit of the LHCI complex.

Its subcellular location is the plastid. It is found in the chloroplast thylakoid membrane. In terms of biological role, required for the insertion of some light-harvesting complexes (LHC) proteins into the chloroplast thylakoid membrane. Essential for the assembly and activity of LHC I and II. Its function is probably partly distinct from that of ALB3.2. In Chlamydomonas reinhardtii (Chlamydomonas smithii), this protein is Inner membrane ALBINO3-like protein 1, chloroplastic (ALB3.1).